The chain runs to 369 residues: Phenylalanine--tRNA ligase alpha subunit (369 aa).

Glutamate 269 contacts Mg(2+).

Belongs to the class-II aminoacyl-tRNA synthetase family. Phe-tRNA synthetase alpha subunit type 1 subfamily. In terms of assembly, tetramer of two alpha and two beta subunits. It depends on Mg(2+) as a cofactor.

It is found in the cytoplasm. It carries out the reaction tRNA(Phe) + L-phenylalanine + ATP = L-phenylalanyl-tRNA(Phe) + AMP + diphosphate + H(+). In Nitrobacter winogradskyi (strain ATCC 25391 / DSM 10237 / CIP 104748 / NCIMB 11846 / Nb-255), this protein is Phenylalanine--tRNA ligase alpha subunit.